We begin with the raw amino-acid sequence, 200 residues long: Ras-related protein Rab-10 (200 aa).

Residues Ser18, Gly19, Val20, Gly21, Lys22, Thr23, Cys24, Asn35, Thr36, Ser40, and Thr41 each coordinate GTP. A Mg(2+)-binding site is contributed by Thr23. 2 short sequence motifs (switch) span residues 32 to 46 (DAFN…GIDF) and 64 to 81 (DTAG…YYRG). Thr41 and Asp64 together coordinate Mg(2+). Residue Gly67 coordinates GTP. Phosphothreonine; by LRRK2 is present on Thr73. Lys102 is modified (N6-acetyllysine). A Glycyl lysine isopeptide (Lys-Gly) (interchain with G-Cter in ubiquitin) cross-link involves residue Lys102. Residues Asn122, Lys123, Asp125, and Met126 each coordinate GTP. Lys136 participates in a covalent cross-link: Glycyl lysine isopeptide (Lys-Gly) (interchain with G-Cter in ubiquitin). The GTP site is built by Ser152, Ala153, and Lys154. Lys154 participates in a covalent cross-link: Glycyl lysine isopeptide (Lys-Gly) (interchain with G-Cter in ubiquitin). 2 S-geranylgeranyl cysteine lipidation sites follow: Cys199 and Cys200.

The protein belongs to the small GTPase superfamily. Rab family. Interacts with MYO5A; mediates the transport to the plasma membrane of SLC2A4/GLUT4 storage vesicles. Interacts with GDI1 and with GDI2; negatively regulates RAB10 association with membranes and activation. Interacts (GDP-bound form) with LLGL1; the interaction is direct and promotes RAB10 association with membranes and activation through competition with the Rab inhibitor GDI1. Interacts with EXOC4; probably associates with the exocyst. Interacts (GTP-bound form) with MICALCL, MICAL1, MICAL3, EHBP1 and EHBP1L1; at least in case of MICAL1 two molecules of RAB10 can bind to one molecule of MICAL1. Interacts with TBC1D13. Interacts with SEC16A. Interacts with CHM and CHML. Interacts with LRRK2; interaction facilitates phosphorylation of Thr-73. Interacts (when phosphorylated on Thr-73) with RILPL1 and RILPL2. Interacts with TBC1D21. Interacts with MARCKS. The cofactor is Mg(2+). In terms of processing, ubiquitinated upon Legionella pneumophila infection. Ubiquitination does not lead to proteasomal degradation. Phosphorylation of Thr-73 in the switch II region by LRRK2 prevents the association of dRAB regulatory proteins, including CHM, CHML and RAB GDP dissociation inhibitors GDI1 and GDI2. Phosphorylation of Thr-73 by LRRK2 is stimulated by RAB29 and RAB32. Phosphorylation by LRRK2 is required for localization to stressed lysosomes. Expressed in the hippocampus. Expressed in neutrophils (at protein level). Expressed in the testis (at protein level).

It is found in the cytoplasmic vesicle membrane. The protein localises to the golgi apparatus membrane. Its subcellular location is the golgi apparatus. The protein resides in the trans-Golgi network membrane. It localises to the endosome membrane. It is found in the recycling endosome membrane. The protein localises to the cytoplasmic vesicle. Its subcellular location is the phagosome membrane. The protein resides in the cytoplasm. It localises to the cytoskeleton. It is found in the cilium basal body. The protein localises to the endoplasmic reticulum membrane. Its subcellular location is the perinuclear region. The protein resides in the lysosome. It catalyses the reaction GTP + H2O = GDP + phosphate + H(+). Regulated by guanine nucleotide exchange factors (GEFs) DENND4C and RABIF which promote the exchange of bound GDP for free GTP. Regulated by GTPase activating proteins (GAPs) including TBC1D21 which increase the GTP hydrolysis activity. Inhibited by GDP dissociation inhibitors GDI1 and GDI2 which prevent Rab-GDP dissociation. Its function is as follows. The small GTPases Rab are key regulators of intracellular membrane trafficking, from the formation of transport vesicles to their fusion with membranes. Rabs cycle between an inactive GDP-bound form and an active GTP-bound form that is able to recruit to membranes different set of downstream effectors directly responsible for vesicle formation, movement, tethering and fusion. That Rab is mainly involved in the biosynthetic transport of proteins from the Golgi to the plasma membrane. Regulates, for instance, SLC2A4/GLUT4 glucose transporter-enriched vesicles delivery to the plasma membrane. In parallel, it regulates the transport of TLR4, a toll-like receptor to the plasma membrane and therefore may be important for innate immune response. Also plays a specific role in asymmetric protein transport to the plasma membrane. In neurons, it is involved in axonogenesis through regulation of vesicular membrane trafficking toward the axonal plasma membrane. In epithelial cells, it regulates transport from the Golgi to the basolateral membrane. May play a role in the basolateral recycling pathway and in phagosome maturation. May play a role in endoplasmic reticulum dynamics and morphology controlling tubulation along microtubules and tubules fusion. Together with LRRK2, RAB8A, and RILPL1, it regulates ciliogenesis. When phosphorylated by LRRK2 on Thr-73, binds RILPL1 and inhibits ciliogenesis. Participates in the export of a subset of neosynthesized proteins through a Rab8-Rab10-Rab11-dependent endososomal export route. Targeted to and stabilized on stressed lysosomes through LRRK2 phosphorylation where it promotes the extracellular release of lysosomal content through EHBP1 and EHNP1L1 effector proteins. (Microbial infection) Upon Legionella pneumophila infection promotes endoplasmic reticulum recruitment and bacterial replication. Plays a role in remodeling the Legionella-containing vacuole (LCV) into an endoplasmic reticulum-like vacuole. This chain is Ras-related protein Rab-10, found in Homo sapiens (Human).